The chain runs to 749 residues: Transcription factor RFX3 (749 aa).

Positions 183–258 (HLQWLLDNYE…YHYYGIRVKP (76 aa)) form a DNA-binding region, RFX-type winged-helix. The segment at 663–699 (VSPGNLDKDEGSEVESEMDEELDDSSEPQAKREKTEL) is disordered. Residues 674–688 (SEVESEMDEELDDSS) show a composition bias toward acidic residues.

This sequence belongs to the RFX family. As to quaternary structure, heterodimer; heterodimerizes with RFX1 and RFX2, and RFX6.

It localises to the nucleus. Its function is as follows. Transcription factor required for ciliogenesis and islet cell differentiation during endocrine pancreas development. Essential for the differentiation of nodal monocilia and left-right asymmetry specification during embryogenesis. Required for the biogenesis of motile cilia by governing growth and beating efficiency of motile cells. Also required for ciliated ependymal cell differentiation. Regulates the expression of genes involved in ciliary assembly (DYNC2LI1, FOXJ1 and BBS4) and genes involved in ciliary motility (DNAH11, DNAH9 and DNAH5). Together with RFX6, participates in the differentiation of 4 of the 5 islet cell types during endocrine pancreas development, with the exception of pancreatic PP (polypeptide-producing) cells. Regulates transcription by forming a heterodimer with another RFX protein and binding to the X-box in the promoter of target genes. Represses transcription of MAP1A in non-neuronal cells but not in neuronal cells. This Homo sapiens (Human) protein is Transcription factor RFX3 (RFX3).